Here is a 227-residue protein sequence, read N- to C-terminus: Cytochrome c oxidase subunit 2 (227 aa).

Residues 1-14 lie on the Mitochondrial intermembrane side of the membrane; it reads MAYPMQLGFQDATS. A helical transmembrane segment spans residues 15-45; the sequence is PIMEELLHFHDHTLMIVFLISSLVLYVISLM. At 46–59 the chain is on the mitochondrial matrix side; the sequence is LTTKLTHTSTMDAQ. A helical transmembrane segment spans residues 60-87; it reads EVETIWTILPAIILILIALPSLRILYMM. At 88 to 227 the chain is on the mitochondrial intermembrane side; the sequence is DEINNPSLTV…YFEKWSASML (140 aa). Residues His-161, Cys-196, Glu-198, Cys-200, His-204, and Met-207 each contribute to the Cu cation site. Glu-198 contacts Mg(2+).

Belongs to the cytochrome c oxidase subunit 2 family. As to quaternary structure, component of the cytochrome c oxidase (complex IV, CIV), a multisubunit enzyme composed of 14 subunits. The complex is composed of a catalytic core of 3 subunits MT-CO1, MT-CO2 and MT-CO3, encoded in the mitochondrial DNA, and 11 supernumerary subunits COX4I, COX5A, COX5B, COX6A, COX6B, COX6C, COX7A, COX7B, COX7C, COX8 and NDUFA4, which are encoded in the nuclear genome. The complex exists as a monomer or a dimer and forms supercomplexes (SCs) in the inner mitochondrial membrane with NADH-ubiquinone oxidoreductase (complex I, CI) and ubiquinol-cytochrome c oxidoreductase (cytochrome b-c1 complex, complex III, CIII), resulting in different assemblies (supercomplex SCI(1)III(2)IV(1) and megacomplex MCI(2)III(2)IV(2)). Found in a complex with TMEM177, COA6, COX18, COX20, SCO1 and SCO2. Interacts with TMEM177 in a COX20-dependent manner. Interacts with COX20. Interacts with COX16. Cu cation serves as cofactor.

The protein resides in the mitochondrion inner membrane. The enzyme catalyses 4 Fe(II)-[cytochrome c] + O2 + 8 H(+)(in) = 4 Fe(III)-[cytochrome c] + 2 H2O + 4 H(+)(out). Functionally, component of the cytochrome c oxidase, the last enzyme in the mitochondrial electron transport chain which drives oxidative phosphorylation. The respiratory chain contains 3 multisubunit complexes succinate dehydrogenase (complex II, CII), ubiquinol-cytochrome c oxidoreductase (cytochrome b-c1 complex, complex III, CIII) and cytochrome c oxidase (complex IV, CIV), that cooperate to transfer electrons derived from NADH and succinate to molecular oxygen, creating an electrochemical gradient over the inner membrane that drives transmembrane transport and the ATP synthase. Cytochrome c oxidase is the component of the respiratory chain that catalyzes the reduction of oxygen to water. Electrons originating from reduced cytochrome c in the intermembrane space (IMS) are transferred via the dinuclear copper A center (CU(A)) of subunit 2 and heme A of subunit 1 to the active site in subunit 1, a binuclear center (BNC) formed by heme A3 and copper B (CU(B)). The BNC reduces molecular oxygen to 2 water molecules using 4 electrons from cytochrome c in the IMS and 4 protons from the mitochondrial matrix. The protein is Cytochrome c oxidase subunit 2 (MT-CO2) of Gazella spekei (Speke's gazelle).